The following is a 399-amino-acid chain: Lysosomal acid lipase/cholesteryl ester hydrolase (399 aa).

A signal peptide spans 1–27; the sequence is MKMRFLGLVVCLVLWTLHSEGSGGKLT. Positions 28–76 are cleaved as a propeptide — removed in mature form; the sequence is AVDPETNMNVSEIISYWGFPSEEYLVETEDGYILCLNRIPHGRKNHSDK. Asn-36, Asn-72, Asn-101, and Asn-161 each carry an N-linked (GlcNAc...) asparagine glycan. An AB hydrolase-1 domain is found at 80–380; the sequence is PVVFLQHGLL…EWEHLDFIWG (301 aa). Ser-174 (charge relay system) is an active-site residue. N-linked (GlcNAc...) asparagine glycans are attached at residues Asn-273 and Asn-321. The active-site Charge relay system is the His-374.

Belongs to the AB hydrolase superfamily. Lipase family. Monomer. Post-translationally, glycosylation is not essential for catalytic activity. As to expression, most abundantly expressed in brain, lung, kidney and mammary gland, a moderate expression seen in placenta and expressed at low levels in the liver and heart.

It is found in the lysosome. It carries out the reaction a sterol ester + H2O = a sterol + a fatty acid + H(+). It catalyses the reaction cholesteryl (9Z-octadecenoate) + H2O = cholesterol + (9Z)-octadecenoate + H(+). The enzyme catalyses a triacylglycerol + H2O = a 1,2-diacylglycerol + a fatty acid + H(+). The catalysed reaction is 1,2-di-(9Z-octadecenoyl)-glycerol + (9Z)-octadecenoate + H(+) = 1,2,3-tri-(9Z-octadecenoyl)-glycerol + H2O. It carries out the reaction a 1,2-diacylglycerol + H2O = a 1-acylglycerol + a fatty acid + H(+). It catalyses the reaction 1,2-di-(9Z-octadecenoyl)-glycerol + H2O = 1-(9Z-octadecenoyl)-glycerol + (9Z)-octadecenoate + H(+). The enzyme catalyses a 1,3-diacylglycerol + H2O = a 1-acylglycerol + a fatty acid + H(+). The catalysed reaction is 1,3-di-(9Z-octadecenoyl)-glycerol + H2O = 1-(9Z-octadecenoyl)-glycerol + (9Z)-octadecenoate + H(+). Functionally, catalyzes the deacylation of cholesteryl ester core lipids of endocytosed low density lipoproteins to generate free fatty acids and cholesterol. Hydrolyzes triglycerides (1,2,3-triacylglycerol) and diglycerides (such as 1,2-diacylglycerol and 1,3-diacylglycerol) with preference for the acyl moieties at the sn-1 or sn-3 positions. The protein is Lysosomal acid lipase/cholesteryl ester hydrolase (LIPA) of Homo sapiens (Human).